A 56-amino-acid polypeptide reads, in one-letter code: Large ribosomal subunit protein bL33c (56 aa).

It belongs to the bacterial ribosomal protein bL33 family.

It is found in the plastid. It localises to the chloroplast. The polypeptide is Large ribosomal subunit protein bL33c (rpl33) (Guillardia theta (Cryptophyte)).